Consider the following 91-residue polypeptide: MAEEHVVYIGKKPVMNYVLAVITQFNEGAKEVSIRARGRAISRAVDVAEIVRNRFLPEVRVKEIKIGTEELPTADGRTANTSTIEIILEKP.

An N6-acetyllysine modification is found at Lys-11.

Belongs to the histone-like Alba family. Post-translationally, acetylated. Acetylation at Lys-11 decreases DNA-binding affinity.

It is found in the cytoplasm. The protein localises to the chromosome. Its function is as follows. Binds double-stranded DNA tightly but without sequence specificity. Incubation with DNA in vitro gives fibrous structures 10.3 +/- 1.1 nm in thickness (naked DNA is 1.83 +/- 0.37 nm). This protein does not significantly compact DNA. This chain is DNA/RNA-binding protein Alba, found in Thermococcus kodakarensis (strain ATCC BAA-918 / JCM 12380 / KOD1) (Pyrococcus kodakaraensis (strain KOD1)).